The chain runs to 377 residues: Protein-arginine rhamnosyltransferase (377 aa).

DTDP-beta-L-rhamnose is bound at residue tyrosine 15. The Proton acceptor role is filled by aspartate 17. DTDP-beta-L-rhamnose contacts are provided by residues tyrosine 193, glutamine 255, and 271 to 275; that span reads RGEDS. The active site involves glutamate 273.

This sequence belongs to the glycosyltransferase 104 family.

The enzyme catalyses dTDP-beta-L-rhamnose + L-arginyl-[protein] = N(omega)-(alpha-L-rhamnosyl)-L-arginyl-[protein] + dTDP + H(+). In terms of biological role, protein-arginine rhamnosyltransferase that catalyzes the transfer of a single rhamnose to elongation factor P (EF-P) on 'Lys-32', a modification required for EF-P-dependent rescue of polyproline stalled ribosomes. The sequence is that of Protein-arginine rhamnosyltransferase from Pseudomonas putida (strain ATCC 47054 / DSM 6125 / CFBP 8728 / NCIMB 11950 / KT2440).